A 544-amino-acid chain; its full sequence is CTP synthase (544 aa).

The tract at residues 1–266 (MSTKFIFVTG…DYFVCRRFHL (266 aa)) is amidoligase domain. Residue Ser-14 coordinates CTP. Ser-14 serves as a coordination point for UTP. Residues 15 to 20 (SLGKGI) and Asp-72 each bind ATP. 2 residues coordinate Mg(2+): Asp-72 and Glu-140. CTP-binding positions include 147–149 (DIE), 187–192 (KTKPTQ), and Lys-223. UTP is bound by residues 187 to 192 (KTKPTQ) and Lys-223. Residues 291–542 (TIGMVGKYIE…VAAAHIHQKA (252 aa)) form the Glutamine amidotransferase type-1 domain. Residue Gly-352 participates in L-glutamine binding. Cys-379 functions as the Nucleophile; for glutamine hydrolysis in the catalytic mechanism. L-glutamine-binding positions include 380–383 (LGMQ), Glu-403, and Arg-470. Residues His-515 and Glu-517 contribute to the active site.

The protein belongs to the CTP synthase family. In terms of assembly, homotetramer.

The catalysed reaction is UTP + L-glutamine + ATP + H2O = CTP + L-glutamate + ADP + phosphate + 2 H(+). It carries out the reaction L-glutamine + H2O = L-glutamate + NH4(+). It catalyses the reaction UTP + NH4(+) + ATP = CTP + ADP + phosphate + 2 H(+). It functions in the pathway pyrimidine metabolism; CTP biosynthesis via de novo pathway; CTP from UDP: step 2/2. With respect to regulation, allosterically activated by GTP, when glutamine is the substrate; GTP has no effect on the reaction when ammonia is the substrate. The allosteric effector GTP functions by stabilizing the protein conformation that binds the tetrahedral intermediate(s) formed during glutamine hydrolysis. Inhibited by the product CTP, via allosteric rather than competitive inhibition. Catalyzes the ATP-dependent amination of UTP to CTP with either L-glutamine or ammonia as the source of nitrogen. Regulates intracellular CTP levels through interactions with the four ribonucleotide triphosphates. This is CTP synthase from Pseudoalteromonas translucida (strain TAC 125).